The sequence spans 253 residues: Tetraspanin-11 (253 aa).

Transmembrane regions (helical) follow at residues 19–39 (LLFVFNFFFWVGGAAVLAVGI), 63–83 (ILIFAGVLVMVTGFLGFGAIL), and 93–113 (YFCLLLVIFLVELVAGVLAHV). The N-linked (GlcNAc...) asparagine glycan is linked to Asn127. A helical membrane pass occupies residues 220–240 (LLLMGAVGIGVACLQICGMVL).

This sequence belongs to the tetraspanin (TM4SF) family.

Its subcellular location is the membrane. This is Tetraspanin-11 (TSPAN11) from Homo sapiens (Human).